The chain runs to 393 residues: Thyrotropin-releasing hormone receptor (393 aa).

The Extracellular segment spans residues 1–28 (MENDTVSEMNQTELQPQAAVALEYQVVT). N-linked (GlcNAc...) asparagine glycosylation is found at Asn-3 and Asn-10. Residues 29–51 (ILLVVIICGLGIVGNIMVVLVVM) form a helical membrane-spanning segment. The Cytoplasmic portion of the chain corresponds to 52–61 (RTKHMRTPTN). Residues 62–83 (CYLVSLAVADLMVLVAAGLPNI) traverse the membrane as a helical segment. Residues 84-99 (TDSIYGSWVYGYVGCL) lie on the Extracellular side of the membrane. An intrachain disulfide couples Cys-98 to Cys-179. A helical transmembrane segment spans residues 100 to 121 (CITYLQYLGINASSCSITAFTI). At 122 to 144 (ERYIAICHPIKAQFLCTFSRAKK) the chain is on the cytoplasmic side. A helical membrane pass occupies residues 145–168 (IIIFVWAFTSIYCMLWFFLLDLNI). At 169-193 (STYKNAVVVSCGYKISRNYYSPIYL) the chain is on the extracellular side. A helical membrane pass occupies residues 194 to 215 (MDFGVFYVVPMILATVLYGFIA). The Cytoplasmic segment spans residues 216-266 (RILFLNPIPSDPKENSKMWKNDSIHQNKNLNLNATNRCFNSTVSSRKQVTK). Residues 267 to 288 (MLAVVVILFALLWMPYRTLVVV) traverse the membrane as a helical segment. Residues 289–296 (NSFLSSPF) lie on the Extracellular side of the membrane. A helical membrane pass occupies residues 297–319 (QENWFLLFCRICIYLNSAINPVI). The Cytoplasmic portion of the chain corresponds to 320-393 (YNLMSQKFRA…FDDTCLASEN (74 aa)).

The protein belongs to the G-protein coupled receptor 1 family.

It is found in the cell membrane. Receptor for thyrotropin-releasing hormone (TRH). Upon ligand binding, this G-protein-coupled receptor triggers activation of the phosphatidylinositol (IP3)-calcium-protein kinase C (PKC) pathway. The protein is Thyrotropin-releasing hormone receptor (Trhr) of Mus musculus (Mouse).